The following is a 113-amino-acid chain: Molt-inhibiting hormone (113 aa).

A signal peptide spans Met1 to Ala35. Cystine bridges form between Cys42–Cys79, Cys59–Cys75, and Cys62–Cys88.

This sequence belongs to the arthropod CHH/MIH/GIH/VIH hormone family.

It is found in the secreted. Its function is as follows. Inhibits Y-organs where molting hormone (ecdysteroid) is secreted. A molting cycle is initiated when MIH secretion diminishes or stops. The polypeptide is Molt-inhibiting hormone (Callinectes sapidus (Blue crab)).